A 305-amino-acid chain; its full sequence is Aspartate carbamoyltransferase catalytic subunit (305 aa).

Carbamoyl phosphate-binding residues include Arg56 and Thr57. Position 85 (Lys85) interacts with L-aspartate. Positions 106, 134, and 137 each coordinate carbamoyl phosphate. Residues Arg167 and Arg227 each contribute to the L-aspartate site. Carbamoyl phosphate-binding residues include Leu266 and Pro267.

It belongs to the aspartate/ornithine carbamoyltransferase superfamily. ATCase family. In terms of assembly, heterooligomer of catalytic and regulatory chains.

The catalysed reaction is carbamoyl phosphate + L-aspartate = N-carbamoyl-L-aspartate + phosphate + H(+). It functions in the pathway pyrimidine metabolism; UMP biosynthesis via de novo pathway; (S)-dihydroorotate from bicarbonate: step 2/3. In terms of biological role, catalyzes the condensation of carbamoyl phosphate and aspartate to form carbamoyl aspartate and inorganic phosphate, the committed step in the de novo pyrimidine nucleotide biosynthesis pathway. The chain is Aspartate carbamoyltransferase catalytic subunit from Thermoplasma acidophilum (strain ATCC 25905 / DSM 1728 / JCM 9062 / NBRC 15155 / AMRC-C165).